The following is a 64-amino-acid chain: Phylloxin-S1 (64 aa).

The first 22 residues, 1 to 22 (MVFLKKSLLLVLFVGLVSLSIC), serve as a signal peptide directing secretion. A propeptide spanning residues 23-44 (EENKREEHEEVEENAEKAEEKR) is cleaved from the precursor. Gln-63 is subject to Glutamine amide.

Expressed by the skin glands.

Its subcellular location is the secreted. In terms of biological role, antimicrobial peptide against both Gram-positive and Gram-negative bacteria. This chain is Phylloxin-S1, found in Phyllomedusa sauvagei (Sauvage's leaf frog).